Consider the following 166-residue polypeptide: ATP synthase subunit b (166 aa).

Residues 7 to 27 form a helical membrane-spanning segment; that stretch reads QFSLGLFILQIILFVGLILLL.

The protein belongs to the ATPase B chain family. In terms of assembly, F-type ATPases have 2 components, F(1) - the catalytic core - and F(0) - the membrane proton channel. F(1) has five subunits: alpha(3), beta(3), gamma(1), delta(1), epsilon(1). F(0) has three main subunits: a(1), b(2) and c(10-14). The alpha and beta chains form an alternating ring which encloses part of the gamma chain. F(1) is attached to F(0) by a central stalk formed by the gamma and epsilon chains, while a peripheral stalk is formed by the delta and b chains.

The protein localises to the cell inner membrane. F(1)F(0) ATP synthase produces ATP from ADP in the presence of a proton or sodium gradient. F-type ATPases consist of two structural domains, F(1) containing the extramembraneous catalytic core and F(0) containing the membrane proton channel, linked together by a central stalk and a peripheral stalk. During catalysis, ATP synthesis in the catalytic domain of F(1) is coupled via a rotary mechanism of the central stalk subunits to proton translocation. In terms of biological role, component of the F(0) channel, it forms part of the peripheral stalk, linking F(1) to F(0). This chain is ATP synthase subunit b, found in Flavobacterium psychrophilum (strain ATCC 49511 / DSM 21280 / CIP 103535 / JIP02/86).